The chain runs to 131 residues: Holo-[acyl-carrier-protein] synthase (131 aa).

2 residues coordinate Mg(2+): Asp8 and Glu57.

Belongs to the P-Pant transferase superfamily. AcpS family. Mg(2+) serves as cofactor.

It localises to the cytoplasm. It catalyses the reaction apo-[ACP] + CoA = holo-[ACP] + adenosine 3',5'-bisphosphate + H(+). Functionally, transfers the 4'-phosphopantetheine moiety from coenzyme A to a Ser of acyl-carrier-protein. This is Holo-[acyl-carrier-protein] synthase from Thiobacillus denitrificans (strain ATCC 25259 / T1).